Reading from the N-terminus, the 935-residue chain is Isoleucine--tRNA ligase (935 aa).

Positions 58–68 (PYANGSIHVGH) match the 'HIGH' region motif. Position 558 (Glu-558) interacts with L-isoleucyl-5'-AMP. Positions 599-603 (KMSKS) match the 'KMSKS' region motif. ATP is bound at residue Lys-602. Zn(2+) is bound by residues Cys-897, Cys-900, Cys-917, and Cys-920.

It belongs to the class-I aminoacyl-tRNA synthetase family. IleS type 1 subfamily. As to quaternary structure, monomer. Zn(2+) serves as cofactor.

The protein localises to the cytoplasm. It carries out the reaction tRNA(Ile) + L-isoleucine + ATP = L-isoleucyl-tRNA(Ile) + AMP + diphosphate. Functionally, catalyzes the attachment of isoleucine to tRNA(Ile). As IleRS can inadvertently accommodate and process structurally similar amino acids such as valine, to avoid such errors it has two additional distinct tRNA(Ile)-dependent editing activities. One activity is designated as 'pretransfer' editing and involves the hydrolysis of activated Val-AMP. The other activity is designated 'posttransfer' editing and involves deacylation of mischarged Val-tRNA(Ile). The polypeptide is Isoleucine--tRNA ligase (Francisella tularensis subsp. holarctica (strain OSU18)).